Reading from the N-terminus, the 117-residue chain is Protein Wnt-6 (117 aa).

Ser1 carries O-palmitoleoyl serine; by PORCN lipidation. A disulfide bridge links Cys83 with Cys98. Asn84 carries an N-linked (GlcNAc...) asparagine glycan.

Belongs to the Wnt family. Palmitoleoylation is required for efficient binding to frizzled receptors. Depalmitoleoylation leads to Wnt signaling pathway inhibition.

It localises to the secreted. It is found in the extracellular space. Its subcellular location is the extracellular matrix. In terms of biological role, ligand for members of the frizzled family of seven transmembrane receptors. Probable developmental protein. May be a signaling molecule which affects the development of discrete regions of tissues. Is likely to signal over only few cell diameters. The protein is Protein Wnt-6 (WNT-6) of Plethodon jordani (Red-cheeked salamander).